A 1547-amino-acid chain; its full sequence is Fatty acid synthase subunit alpha (1547 aa).

Residues 94–121 (TLPEAHPPPPIDSHQEPSTQTQATHRSA) form a disordered region. The segment covering 109–118 (EPSTQTQATH) has biased composition (polar residues). The Carrier domain maps to 145–221 (LPVSTIVRSL…ETMSIGHNGR (77 aa)). S180 is subject to O-(pantetheine 4'-phosphoryl)serine. Residues 563-798 (GKNVLITGAG…ATLMGGTITT (236 aa)) are ketoreductase (KR) domain. In terms of domain architecture, Ketosynthase family 3 (KS3) spans 1004-1476 (KESLQEIVLQ…QKGSQAILIH (473 aa)). Catalysis depends on for beta-ketoacyl synthase activity residues C1190 and H1442.

It belongs to the thiolase-like superfamily. Fungal fatty acid synthetase subunit alpha family. Pantetheine 4'-phosphate is required as a cofactor.

It catalyses the reaction acetyl-CoA + n malonyl-CoA + 2n NADPH + 4n H(+) = a long-chain-acyl-CoA + n CoA + n CO2 + 2n NADP(+).. It carries out the reaction a fatty acyl-[ACP] + malonyl-[ACP] + H(+) = a 3-oxoacyl-[ACP] + holo-[ACP] + CO2. The enzyme catalyses a (3R)-hydroxyacyl-[ACP] + NADP(+) = a 3-oxoacyl-[ACP] + NADPH + H(+). It functions in the pathway mycotoxin biosynthesis; HC-toxin biosynthesis. In terms of biological role, fatty acid synthase alpha subunit, part of the diffuse TOX2 gene cluster that mediates the biosynthesis of the HC-toxin, cyclic tetrapeptide of structure cyclo(D-Pro-L-Ala-D-Ala-L-Aeo), where Aeo stands for 2-amino-9,10-epoxi-8-oxodecanoic acid. HC-toxin is a determinant of specificity and virulence in the interaction between the producing fungus and its host, maize. TOXH contribute to the synthesis of the decanoic backbone of 2-amino-9,10-epoxi-8-oxodecanoic acid, an essential precursor for the production of the major forms of HC-toxin by the non-ribosomal peptide synthetase HTS1. The protein is Fatty acid synthase subunit alpha of Cochliobolus carbonum (Maize leaf spot fungus).